We begin with the raw amino-acid sequence, 387 residues long: Patatin group A-2 (387 aa).

Residues Met1–Ala23 form the signal peptide. One can recognise a PNPLA domain in the interval Leu32–Val230. The GXGXXG signature appears at Gly36–Gly41. The GXSXG motif lies at Gly75–Gly79. The Nucleophile role is filled by Ser77. A glycan (N-linked (GlcNAc...) asparagine) is linked at Asn115. Residue Asp216 is the Proton acceptor of the active site. The DGA/G motif lies at Asp216–Ala218. Residues Glu361 to Ala385 are a coiled coil.

It belongs to the patatin family. As to expression, tuber and stolon.

It is found in the vacuole. Its function is as follows. Probable lipolytic acyl hydrolase (LAH), an activity which is thought to be involved in the response of tubers to pathogens. This chain is Patatin group A-2, found in Solanum tuberosum (Potato).